Reading from the N-terminus, the 156-residue chain is Ribosome maturation factor RimP (156 aa).

The protein belongs to the RimP family.

It localises to the cytoplasm. Functionally, required for maturation of 30S ribosomal subunits. The protein is Ribosome maturation factor RimP of Oenococcus oeni (strain ATCC BAA-331 / PSU-1).